A 550-amino-acid chain; its full sequence is Solute carrier family 22 member 6 (550 aa).

The Cytoplasmic segment spans residues 1–9 (MAFNDLLQQ). A helical transmembrane segment spans residues 10–30 (VGGVGRFQQIQVTLVVLPLLL). The Extracellular segment spans residues 31–135 (MASHNTVQNF…LVCSHRALRQ (105 aa)). 3 N-linked (GlcNAc...) asparagine glycosylation sites follow: asparagine 56, asparagine 92, and asparagine 113. A helical transmembrane segment spans residues 136–156 (LAQSLYMVGVLLGAMVFGYLA). Over 157–164 (DRLGRRKV) the chain is Cytoplasmic. Residues 165-187 (LILNYLQTAVSGTCAAFAPNFPI) form a helical membrane-spanning segment. Over 188–190 (YCA) the chain is Extracellular. A helical transmembrane segment spans residues 191 to 213 (FRLLSGMSLAGIALNCMTLNVEW). Topologically, residues 214–224 (MPIHTRACVGT) are cytoplasmic. A helical membrane pass occupies residues 225–245 (LIGYVYSLGQFLLAGVAYAVP). Residues 246 to 248 (HWR) lie on the Extracellular side of the membrane. The helical transmembrane segment at 249-269 (HLQLLISVPFFAFFIYSWFFI) threads the bilayer. Residues 270–337 (ESARWHSSSG…ELLRCPTLRH (68 aa)) lie on the Cytoplasmic side of the membrane. The helical transmembrane segment at 338 to 358 (LFLCLSMLWFATSFAYYGLVM) threads the bilayer. The Extracellular portion of the chain corresponds to 359-368 (DLQGFGVSIY). The helical transmembrane segment at 369-389 (LIQVIFGAVDLPAKLVGFLVI) threads the bilayer. Topologically, residues 390-395 (NSLGRR) are cytoplasmic. Residues 396–416 (PAQMAALLLAGICILLNGVVP) form a helical membrane-spanning segment. The Extracellular segment spans residues 417–425 (QDQSVIRTS). The chain crosses the membrane as a helical span at residues 426–446 (LAVLGKGCLAASFNCIFLYTG). At 447–456 (ELYPTMIRQT) the chain is on the cytoplasmic side. Residues 457–477 (GLGMGSTMARVGSIVSPLVSM) traverse the membrane as a helical segment. Over 478 to 484 (TTELYPS) the chain is Extracellular. A helical membrane pass occupies residues 485–505 (VPLFIYGAVPVAASAVTVLLP). The Cytoplasmic segment spans residues 506–550 (ETLGQPLPDTVQDLESRKGKQTPQQQEHQKYMVPLQASAQEKNGL). A disordered region spans residues 513 to 550 (PDTVQDLESRKGKQTPQQQEHQKYMVPLQASAQEKNGL).

This sequence belongs to the major facilitator (TC 2.A.1) superfamily. Organic cation transporter (TC 2.A.1.19) family. Post-translationally, glycosylated. Glycosylation is necessary for proper targeting of the transporter to the plasma membrane. In terms of tissue distribution, expressed in kidney; in the basolateral membrane of the proximal tubule.

The protein resides in the basolateral cell membrane. It localises to the basal cell membrane. The catalysed reaction is (6R)-L-erythro-5,6,7,8-tetrahydrobiopterin(out) + a dicarboxylate(in) = (6R)-L-erythro-5,6,7,8-tetrahydrobiopterin(in) + a dicarboxylate(out). It carries out the reaction L-erythro-7,8-dihydrobiopterin(out) + a dicarboxylate(in) = L-erythro-7,8-dihydrobiopterin(in) + a dicarboxylate(out). The enzyme catalyses L-sepiapterin(out) + a dicarboxylate(in) = L-sepiapterin(in) + a dicarboxylate(out). It catalyses the reaction prostaglandin F2alpha(out) + a dicarboxylate(in) = prostaglandin F2alpha(in) + a dicarboxylate(out). The catalysed reaction is prostaglandin E2(out) + a dicarboxylate(in) = prostaglandin E2(in) + a dicarboxylate(out). It carries out the reaction 3',5'-cyclic AMP(out) + a dicarboxylate(in) = 3',5'-cyclic AMP(in) + a dicarboxylate(out). The enzyme catalyses 3',5'-cyclic GMP(out) + a dicarboxylate(in) = 3',5'-cyclic GMP(in) + a dicarboxylate(out). It catalyses the reaction urate(out) + a dicarboxylate(in) = urate(in) + a dicarboxylate(out). The catalysed reaction is kynurenate(out) + glutarate(in) = kynurenate(in) + glutarate(out). It carries out the reaction (indol-3-yl)acetate(out) + a dicarboxylate(in) = (indol-3-yl)acetate(in) + a dicarboxylate(out). The enzyme catalyses indoxyl sulfate(out) + a dicarboxylate(in) = indoxyl sulfate(in) + a dicarboxylate(out). It catalyses the reaction N-benzoylglycine(out) + a dicarboxylate(in) = N-benzoylglycine(in) + a dicarboxylate(out). The catalysed reaction is 3-carboxy-4-methyl-5-propyl-2-furanpropanoate(out) + a dicarboxylate(in) = 3-carboxy-4-methyl-5-propyl-2-furanpropanoate(in) + a dicarboxylate(out). In terms of biological role, secondary active transporter that functions as a Na(+)-independent organic anion (OA)/dicarboxylate antiporter where the uptake of one molecule of OA into the cell is coupled with an efflux of one molecule of intracellular dicarboxylate such as 2-oxoglutarate or glutarate. Mediates the uptake of OA across the basolateral side of proximal tubule epithelial cells, thereby contributing to the renal elimination of endogenous OA from the systemic circulation into the urine. Functions as a biopterin transporters involved in the uptake and the secretion of coenzymes tetrahydrobiopterin (BH4), dihydrobiopterin (BH2) and sepiapterin to urine, thereby determining baseline levels of blood biopterins. Transports prostaglandin E2 (PGE2) and prostaglandin F2-alpha (PGF2-alpha) and may contribute to their renal excretion. Also mediates the uptake of cyclic nucleotides such as cAMP and cGMP. Involved in the transport of neuroactive tryptophan metabolites kynurenate (KYNA) and xanthurenate (XA) and may contribute to their secretion from the brain. May transport glutamate. Also involved in the disposition of uremic toxins and potentially toxic xenobiotics by the renal organic anion secretory pathway, helping reduce their undesired toxicological effects on the body. Uremic toxins include the indoxyl sulfate (IS), hippurate/N-benzoylglycine (HA), indole acetate (IA), 3-carboxy-4- methyl-5-propyl-2-furanpropionate (CMPF) and urate. Xenobiotics include the mycotoxin ochratoxin (OTA). May also contribute to the transport of organic compounds in testes across the blood-testis-barrier. In Macaca fascicularis (Crab-eating macaque), this protein is Solute carrier family 22 member 6.